A 726-amino-acid polypeptide reads, in one-letter code: Dipeptidyl-peptidase 5 (726 aa).

The first 19 residues, 1–19 (MAAAKWLIASLAFASSGLA), serve as a signal peptide directing secretion. N-linked (GlcNAc...) asparagine glycans are attached at residues N96 and N252. The segment at 269–291 (AEPINKRNGPRTPQAIEGASSSP) is disordered. S558 functions as the Charge relay system in the catalytic mechanism. A glycan (N-linked (GlcNAc...) asparagine) is linked at N605. Residues D641 and H673 each act as charge relay system in the active site. N699 is a glycosylation site (N-linked (GlcNAc...) asparagine).

This sequence belongs to the peptidase S9C family.

The protein localises to the secreted. In terms of biological role, extracellular dipeptidyl-peptidase which removes N-terminal dipeptides sequentially from polypeptides having unsubstituted N-termini. Contributes to pathogenicity. This chain is Dipeptidyl-peptidase 5 (DPP5), found in Trichophyton equinum (Horse ringworm fungus).